We begin with the raw amino-acid sequence, 297 residues long: Mitochondrial ornithine transporter 1 (297 aa).

Solcar repeat units follow at residues 15-97, 102-205, and 212-292; these read GSPA…LKLT, DPTL…FKKN, and KPHF…FRET. 6 helical membrane passes run 18 to 38, 72 to 91, 107 to 127, 184 to 204, 215 to 235, and 264 to 285; these read ASTF…GYPL, GLTL…FTVY, YFIS…PFEY, HLTR…TFKK, FAYA…VFPV, and IYRG…NFTL.

The protein belongs to the mitochondrial carrier (TC 2.A.29) family.

Its subcellular location is the mitochondrion inner membrane. Required for arginine biosynthesis. Transports ornithine synthesized from glutamate in the mitochondrial matrix to the cytosol, where it is converted to arginine. The protein is Mitochondrial ornithine transporter 1 of Schizosaccharomyces pombe (strain 972 / ATCC 24843) (Fission yeast).